Reading from the N-terminus, the 187-residue chain is Calcium and integrin-binding family member 2 (187 aa).

3 EF-hand domains span residues 66–101 (RENP…LCES), 103–138 (PREL…LTKS), and 144–179 (EVVL…APDF). Positions 116, 118, 120, 127, 157, 159, 161, 163, and 168 each coordinate Ca(2+).

Monomer. Homodimer. Interacts with WHRN and MYO7A. Interacts with ITGA2B (via C-terminus cytoplasmic tail region); the interactions are stabilized/increased in a calcium and magnesium-dependent manner. Interacts with ITGA7 (via C-terminus cytoplasmic tail region); the interactions are stabilized/increased in a calcium and magnesium-dependent manner. Interacts with TMC1. Interacts with TMC2. As to expression, widely expressed.

The protein resides in the cytoplasm. It localises to the cell projection. Its subcellular location is the stereocilium. The protein localises to the photoreceptor inner segment. It is found in the cilium. The protein resides in the photoreceptor outer segment. It localises to the cell membrane. Its subcellular location is the sarcolemma. Functionally, calcium- and integrin-binding protein that plays a role in intracellular calcium homeostasis. Acts as an auxiliary subunit of the sensory mechanoelectrical transduction (MET) channel in hair cells. Essential for mechanoelectrical transduction (MET) currents in auditory hair cells and thereby required for hearing. Regulates the function of hair cell mechanotransduction by controlling the distribution of transmembrane channel-like proteins TMC1 and TMC2, and by regulating the function of the MET channels in hair cells. Required for the maintenance of auditory hair cell stereocilia bundle morphology and function and for hair-cell survival in the cochlea. Critical for proper photoreceptor cell maintenance and function. Plays a role in intracellular calcium homeostasis by decreasing ATP-induced calcium release. In Homo sapiens (Human), this protein is Calcium and integrin-binding family member 2 (CIB2).